Reading from the N-terminus, the 187-residue chain is Adenylate kinase 1 (187 aa).

14–19 provides a ligand contact to ATP; the sequence is GSGKGT. The NMP stretch occupies residues 34-63; it reads STGDMLRQAIADGTELGNQAKGYMDKGELV. Residues Thr-35, Arg-40, 61-63, 89-92, and Gln-96 contribute to the AMP site; these read ELV and GFPR. An LID region spans residues 130–136; that stretch reads ARGRADD. Arg-131 serves as a coordination point for ATP. Residues Arg-133 and Arg-144 each coordinate AMP. Gln-172 serves as a coordination point for ATP.

It belongs to the adenylate kinase family. As to quaternary structure, monomer.

The protein resides in the cytoplasm. It catalyses the reaction AMP + ATP = 2 ADP. It participates in purine metabolism; AMP biosynthesis via salvage pathway; AMP from ADP: step 1/1. Its function is as follows. Catalyzes the reversible transfer of the terminal phosphate group between ATP and AMP. Plays an important role in cellular energy homeostasis and in adenine nucleotide metabolism. The polypeptide is Adenylate kinase 1 (Synechocystis sp. (strain ATCC 27184 / PCC 6803 / Kazusa)).